A 644-amino-acid chain; its full sequence is Protein cueball (644 aa).

The first 26 residues, 1 to 26 (MIRIRFGMDVLLVLLLATCLLSPTHG), serve as a signal peptide directing secretion. At 27–531 (TPLEWDFAVT…VCLTPTVWTS (505 aa)) the chain is on the extracellular side. 2 N-linked (GlcNAc...) asparagine glycosylation sites follow: asparagine 82 and asparagine 108. 3 LDL-receptor class B repeats span residues 121–166 (TNLF…DVCR), 167–211 (RKLY…DQLS), and 212–257 (DRLF…TNDA). N-linked (GlcNAc...) asparagine glycans are attached at residues asparagine 175 and asparagine 190. N-linked (GlcNAc...) asparagine glycosylation occurs at asparagine 313. 2 consecutive EGF-like domains span residues 398–430 (EIRE…FTGE) and 433–471 (EVSV…ARCE). 5 disulfide bridges follow: cysteine 402/cysteine 411, cysteine 406/cysteine 421, cysteine 437/cysteine 447, cysteine 441/cysteine 459, and cysteine 461/cysteine 470. Residues asparagine 473 and asparagine 508 are each glycosylated (N-linked (GlcNAc...) asparagine). The chain crosses the membrane as a helical span at residues 532-552 (SVIIILVVGIVSSLLLVAVIV). Over 553 to 644 (HGIRRLYKPK…LIHNMEDDLY (92 aa)) the chain is Cytoplasmic.

This sequence belongs to the cueball family.

Its subcellular location is the cell membrane. Its function is as follows. Has a role in spermatogenesis and oogenesis. This Drosophila yakuba (Fruit fly) protein is Protein cueball.